Here is a 315-residue protein sequence, read N- to C-terminus: WD repeat domain-containing protein 83 (315 aa).

WD repeat units lie at residues 23 to 62, 65 to 104, 107 to 146, 151 to 188, 190 to 228, 231 to 272, and 275 to 313; these read CGQG…LLRT, GHGY…VVRK, GHAG…PEPV, EARD…LFSD, VGSP…LLGE, GHKN…LALA, and VGSG…AEDG.

It belongs to the WD repeat MORG1 family. In terms of assembly, interacts with EGLN3/PHD3. Interacts with ERK signaling proteins MAP2K1/MEK1, MAP2K2/MEK2, LAMTOR3, ARAF/Raf-1, MAPK1/ERK2 and MAPK3/ERK1. Identified in the spliceosome C complex. Interacts with PARD6B and CRB3. Interacts strongly with GTP-bound RRAGA but not with inactive GDP-bound. Interacts with p62/SQSTM1.

It is found in the cytoplasm. The protein localises to the lysosome. Its subcellular location is the nucleus. In terms of biological role, molecular scaffold protein for various multimeric protein complexes. Acts as a module in the assembly of a multicomponent scaffold for the ERK pathway, linking ERK responses to specific agonists. At low concentrations it enhances ERK activation, whereas high concentrations lead to the inhibition of ERK activation. Also involved in response to hypoxia by acting as a negative regulator of HIF1A/HIF-1-alpha via its interaction with EGLN3/PHD3. May promote degradation of HIF1A. May act by recruiting signaling complexes to a specific upstream activator. May also be involved in pre-mRNA splicing. Participates in tight junction development by regulating apico-basal polarity, a key step in tissue development and organization. Mechanistically, regulates the translocation of PAR6-aPKC from the cytoplasm to the apical surface by acting as an adapter between PARD6B AND CRB3. Also acts as a negative regulator of mTORC1 under nutrient-rich conditions by binding to the active Rag GTPases to inhibit mTORC1 localization to the lysosome and phosphorylation of downstream targets. This facilitates constitutive basal autophagy during nutrient availability. This chain is WD repeat domain-containing protein 83 (WDR83), found in Homo sapiens (Human).